We begin with the raw amino-acid sequence, 486 residues long: MVQLNQNFIDTITQELPAHLSMDEFIAACDRPLRRSIRVNTLKISSDDFKTLMQPKGWTFDPIPWCEDGFWISYDEEEQLGNALEHIQGLFYIQEASSMLPPTALFTPSAFTTSTKWQCVLDLASAPGSKTTQMAALMQNQGLLVANEYSASRVKVLHANVLRMGASHCALTHFDGRVFGEYLYESFDAVLIDAPCGGEGTVRKDADALKHWSLDDVLAISETQKALIESAFLALKPGGSLVYSTCTLNRLENQGVCEYLKQVYGDAVQFESLSDLFDGAERATTAEGFLHVWPQIYDSEGFFVAKLTKTASVPRLLPEPKLQKNFPFTPASAKQAQGIKDYFQQDLGISLPDELIMVRDDEFWLFPHEFNAFIGRMRFQRIGIKLADSSKHGFKVRHEAIIALAGKQLSPTAKTVDVSDVEAKEYLMGRDIPLATAGKAQGEVIVCYGGAPLGMAKHLGNKLKNNLPRDLVKDKVLLLPEQTKSL.

S-adenosyl-L-methionine-binding positions include 124-130, E148, D175, and D193; that span reads ASAPGSK. The Nucleophile role is filled by C246.

This sequence belongs to the class I-like SAM-binding methyltransferase superfamily. RsmB/NOP family.

It is found in the cytoplasm. The enzyme catalyses cytidine(1407) in 16S rRNA + S-adenosyl-L-methionine = 5-methylcytidine(1407) in 16S rRNA + S-adenosyl-L-homocysteine + H(+). Specifically methylates the cytosine at position 1407 (m5C1407) of 16S rRNA. The protein is Ribosomal RNA small subunit methyltransferase F of Shewanella baltica (strain OS195).